Here is a 490-residue protein sequence, read N- to C-terminus: Tegument protein VP16 (490 aa).

Residues aspartate 11–leucine 35 are disordered. Phosphoserine occurs at positions 16, 351, 411, and 453. The interval serine 411–glycine 490 is transcriptional activation.

The protein belongs to the herpesviridae tegument protein VP16 protein family. In terms of assembly, interacts with VP22. Interacts with gH (via C-terminus). Interacts with the virion host shutoff protein (vhs). Interacts with VP11/12. Associates with the VP16-induced complex; binding to host HCFC1 activates VP16 for association with the octamer motif-binding host protein POU2F1, to form a multiprotein-DNA complex responsible for activating transcription of the viral immediate early genes.

It localises to the virion tegument. The protein resides in the host nucleus. Transcriptional activator of immediate-early (IE) gene products (alpha genes). Acts as a key activator of lytic infection by initiating the lytic program through the assembly of the transcriptional regulatory VP16-induced complex composed of VP16 and two cellular factors, HCFC1 and POU2F 1. VP16-induced complex represents a regulatory switch: when it is on, it promotes IE-gene expression and thus lytic infection, and when it is off, it limits IE-gene transcription favoring latent infection. Functionally, may play a role in the aggregation of tegument proteins around nucleocapsids during virus morphogenesis. The polypeptide is Tegument protein VP16 (Human herpesvirus 2 (strain 333) (HHV-2)).